We begin with the raw amino-acid sequence, 1087 residues long: Formin-H (1087 aa).

Over residues 1 to 23 (MSFDLESNSSGGSTIGRNSSIRL) the composition is skewed to polar residues. The interval 1–25 (MSFDLESNSSGGSTIGRNSSIRLSS) is disordered. Residues 34–394 (VSLNEIIDLD…QLEDELKIHP (361 aa)) form the GBD/FH3 domain. 2 stretches are compositionally biased toward low complexity: residues 416 to 436 (FGFG…SMAK) and 549 to 558 (SPGSTLSPSP). Disordered regions lie at residues 416–445 (FGFG…DNEE), 549–625 (SPGS…PAKP), and 1048–1087 (VDSL…QLKK). Positions 433 to 461 (SMAKTELKKDNEEKQKTIEHLLKQLNKFS) form a coiled coil. Over residues 569 to 588 (FGITSSSIHTSTDKLTNSTE) the composition is skewed to polar residues. The FH1 domain occupies 589-615 (PILGSPPPPPPPPMSGGGGPPPPPPPP). Residues 592–616 (GSPPPPPPPPMSGGGGPPPPPPPPG) show a composition bias toward pro residues. The 394-residue stretch at 623-1016 (AKPIIKPSVK…ENSKMEDPEK (394 aa)) folds into the FH2 domain. The region spanning 1013–1051 (DPEKGGLQDLSSQIRSGQLFKDRRVGDSVIAQMQNVDSL) is the DAD domain.

Belongs to the formin homology family. Diaphanous subfamily. As to quaternary structure, interacts with vasP, proB/profilin-2 and rac1A. Interacts (via GBD/FH3 domain) with activated Rho-GTPases.

It localises to the cytoplasm. The protein resides in the cell cortex. Its subcellular location is the cytoskeleton. Formins play an important role in the nucleation of actin and the formation of linear actin filaments. Important for cell migration and formation, elongation and maintenance of filopodia. Specifically controls filopodial dynamics by regulating actin turnover at the barbed ends of actin filaments. In Dictyostelium discoideum (Social amoeba), this protein is Formin-H (forH).